A 570-amino-acid polypeptide reads, in one-letter code: Protein NRT1/ PTR FAMILY 8.2 (570 aa).

Threonine 99 bears the Phosphothreonine mark. Helical transmembrane passes span isoleucine 100–valine 120, alanine 136–isoleucine 156, phenylalanine 182–valine 202, tryptophan 210–alanine 230, isoleucine 335–leucine 355, isoleucine 370–tyrosine 390, isoleucine 414–alanine 434, isoleucine 454–glycine 474, alanine 493–valine 513, and tyrosine 537–alanine 557.

Belongs to the major facilitator superfamily. Proton-dependent oligopeptide transporter (POT/PTR) (TC 2.A.17) family. Expressed in developing and germinating pollen grains and ovules.

Its subcellular location is the cell membrane. Its function is as follows. Peptide transporter. Mediates the transport of di- and tripeptides. High affinity transporter. Involved in the uptake of peptides during pollen germination and tube growth. This Arabidopsis thaliana (Mouse-ear cress) protein is Protein NRT1/ PTR FAMILY 8.2 (NPF8.2).